We begin with the raw amino-acid sequence, 471 residues long: MKTLSPVDAVLKKVRAFNAEHGMFRPGDRVVVAVSGGADSVALVDILVSLNELRLDLVVAHLNHKLRGAASDEDERFVEQCAQTYALPFVSRGEQVKALAEWERLSLEDAGRRARYAFFDDVAAACGARTVALAHHADDQAETLLMRLVRGAGGLGLSAMQPVGAGGKYVRPLLALGRQEIEAYLDARGLAFRQDQSNTDVAFLRNRIRHELVPYLGRLNPGAASRLARTAELLADDEALLSRLVEEALRRHVMVTEQGGAICSVDTLRREPRGLRRRLYRKAIALAKGDLARISFDHVDAIDRLVLSENPSGRLHLPEEILVTRSYNEVAFARRMADIPSLQELWIDGPGCWPLSGGGELVVEIATGPPPWGELSTTESWFDLELAPFPWLIRGWRPGDRMIPLGMTGEKKVKDIFIDQKVPRELRRSIPLLFRGDSLLWVCGCRRGESARITAGSRAMAVVRIRGRRLK.

35–40 (SGGADS) contacts ATP.

This sequence belongs to the tRNA(Ile)-lysidine synthase family.

Its subcellular location is the cytoplasm. It catalyses the reaction cytidine(34) in tRNA(Ile2) + L-lysine + ATP = lysidine(34) in tRNA(Ile2) + AMP + diphosphate + H(+). Ligates lysine onto the cytidine present at position 34 of the AUA codon-specific tRNA(Ile) that contains the anticodon CAU, in an ATP-dependent manner. Cytidine is converted to lysidine, thus changing the amino acid specificity of the tRNA from methionine to isoleucine. The chain is tRNA(Ile)-lysidine synthase from Geobacter sulfurreducens (strain ATCC 51573 / DSM 12127 / PCA).